We begin with the raw amino-acid sequence, 492 residues long: Glutamyl-tRNA(Gln) amidotransferase subunit A (492 aa).

Residues Lys-79 and Ser-154 each act as charge relay system in the active site. The Acyl-ester intermediate role is filled by Ser-178.

The protein belongs to the amidase family. GatA subfamily. Heterotrimer of A, B and C subunits.

It catalyses the reaction L-glutamyl-tRNA(Gln) + L-glutamine + ATP + H2O = L-glutaminyl-tRNA(Gln) + L-glutamate + ADP + phosphate + H(+). Its function is as follows. Allows the formation of correctly charged Gln-tRNA(Gln) through the transamidation of misacylated Glu-tRNA(Gln) in organisms which lack glutaminyl-tRNA synthetase. The reaction takes place in the presence of glutamine and ATP through an activated gamma-phospho-Glu-tRNA(Gln). This chain is Glutamyl-tRNA(Gln) amidotransferase subunit A, found in Acinetobacter baylyi (strain ATCC 33305 / BD413 / ADP1).